Consider the following 123-residue polypeptide: Secreted RxLR effector protein RXLR-C21 (123 aa).

The N-terminal stretch at 1–23 (MRLHLLVLSVIVVSLLVSDNAHA) is a signal peptide. The short motif at 32-65 (RALRETPINGLVTNQLAVSRNLTPAKFITNSEER) is the RxLR-dEER element. A helical membrane pass occupies residues 101–121 (VTTICSIVLFVMVFGCLYKIF).

Belongs to the RxLR effector family.

The protein localises to the secreted. It localises to the host endoplasmic reticulum membrane. Secreted effector that does not suppress pattern-triggered immunity (PTI) in plant host. This Plasmopara halstedii (Downy mildew of sunflower) protein is Secreted RxLR effector protein RXLR-C21.